A 66-amino-acid polypeptide reads, in one-letter code: Large ribosomal subunit protein bL33 (66 aa).

It belongs to the bacterial ribosomal protein bL33 family.

The polypeptide is Large ribosomal subunit protein bL33 (Wolbachia pipientis subsp. Culex pipiens (strain wPip)).